Here is a 316-residue protein sequence, read N- to C-terminus: Methionyl-tRNA formyltransferase (316 aa).

112-115 provides a ligand contact to (6S)-5,6,7,8-tetrahydrofolate; sequence SLLP.

It belongs to the Fmt family.

It catalyses the reaction L-methionyl-tRNA(fMet) + (6R)-10-formyltetrahydrofolate = N-formyl-L-methionyl-tRNA(fMet) + (6S)-5,6,7,8-tetrahydrofolate + H(+). In terms of biological role, attaches a formyl group to the free amino group of methionyl-tRNA(fMet). The formyl group appears to play a dual role in the initiator identity of N-formylmethionyl-tRNA by promoting its recognition by IF2 and preventing the misappropriation of this tRNA by the elongation apparatus. This Trichlorobacter lovleyi (strain ATCC BAA-1151 / DSM 17278 / SZ) (Geobacter lovleyi) protein is Methionyl-tRNA formyltransferase.